A 142-amino-acid chain; its full sequence is MAKKIIGYIKLQVPAGKANPSPPIGPALGQRGLNIMEFCKAFNAATQGLEPGMPIPVVITAYGDRTFTYITKTPPMTYFLKKAAGIGKGSTTPGKGSAGTVTMEQVRDIAEKKMPDLNSPTIEAAVQMVVGSARSMGLQVVE.

The protein belongs to the universal ribosomal protein uL11 family. In terms of assembly, part of the ribosomal stalk of the 50S ribosomal subunit. Interacts with L10 and the large rRNA to form the base of the stalk. L10 forms an elongated spine to which L12 dimers bind in a sequential fashion forming a multimeric L10(L12)X complex. Post-translationally, one or more lysine residues are methylated.

In terms of biological role, forms part of the ribosomal stalk which helps the ribosome interact with GTP-bound translation factors. The polypeptide is Large ribosomal subunit protein uL11 (Rhodospirillum rubrum (strain ATCC 11170 / ATH 1.1.1 / DSM 467 / LMG 4362 / NCIMB 8255 / S1)).